Consider the following 156-residue polypeptide: Peroxisome assembly protein 22 (156 aa).

A helical transmembrane segment spans residues 24–46; sequence LSIIAVGVLSTVAVTVGYLLYLY.

The protein belongs to the peroxin-22 family.

The protein localises to the peroxisome membrane. Involved in peroxisome biogenesis. The protein is Peroxisome assembly protein 22 (PEX22) of Kluyveromyces lactis (strain ATCC 8585 / CBS 2359 / DSM 70799 / NBRC 1267 / NRRL Y-1140 / WM37) (Yeast).